A 220-amino-acid chain; its full sequence is Small ribosomal subunit protein uS3c (220 aa).

The KH type-2 domain maps to 43–120 (IQHYVEKNTR…RLNIAIIRVA (78 aa)).

Belongs to the universal ribosomal protein uS3 family. Part of the 30S ribosomal subunit.

The protein localises to the plastid. The protein resides in the chloroplast. The chain is Small ribosomal subunit protein uS3c (rps3) from Piper cenocladum (Ant piper).